A 336-amino-acid chain; its full sequence is Pyridoxal 5'-phosphate synthase subunit PdxS (336 aa).

D30 contacts D-ribose 5-phosphate. K87 (schiff-base intermediate with D-ribose 5-phosphate) is an active-site residue. Residue G159 participates in D-ribose 5-phosphate binding. R171 serves as a coordination point for D-glyceraldehyde 3-phosphate. D-ribose 5-phosphate contacts are provided by residues G257 and 278-279; that span reads GS.

It belongs to the PdxS/SNZ family. In the presence of PdxT, forms a dodecamer of heterodimers.

The catalysed reaction is aldehydo-D-ribose 5-phosphate + D-glyceraldehyde 3-phosphate + L-glutamine = pyridoxal 5'-phosphate + L-glutamate + phosphate + 3 H2O + H(+). It participates in cofactor biosynthesis; pyridoxal 5'-phosphate biosynthesis. Functionally, catalyzes the formation of pyridoxal 5'-phosphate from ribose 5-phosphate (RBP), glyceraldehyde 3-phosphate (G3P) and ammonia. The ammonia is provided by the PdxT subunit. Can also use ribulose 5-phosphate and dihydroxyacetone phosphate as substrates, resulting from enzyme-catalyzed isomerization of RBP and G3P, respectively. This chain is Pyridoxal 5'-phosphate synthase subunit PdxS, found in Thermoplasma volcanium (strain ATCC 51530 / DSM 4299 / JCM 9571 / NBRC 15438 / GSS1).